We begin with the raw amino-acid sequence, 70 residues long: Small ribosomal subunit protein bS21A (70 aa).

The protein belongs to the bacterial ribosomal protein bS21 family.

The chain is Small ribosomal subunit protein bS21A from Paraburkholderia xenovorans (strain LB400).